Here is a 420-residue protein sequence, read N- to C-terminus: 3-phosphoshikimate 1-carboxyvinyltransferase (420 aa).

3-phosphoshikimate-binding residues include K20, S21, and R25. K20 contributes to the phosphoenolpyruvate binding site. Phosphoenolpyruvate is bound at residue R119. 3-phosphoshikimate-binding residues include S161, S162, Q163, S189, D303, Q326, and K330. Q163 serves as a coordination point for phosphoenolpyruvate. The Proton acceptor role is filled by D303. 3 residues coordinate phosphoenolpyruvate: R334, R375, and K400.

This sequence belongs to the EPSP synthase family. Monomer.

It is found in the cytoplasm. The enzyme catalyses 3-phosphoshikimate + phosphoenolpyruvate = 5-O-(1-carboxyvinyl)-3-phosphoshikimate + phosphate. The protein operates within metabolic intermediate biosynthesis; chorismate biosynthesis; chorismate from D-erythrose 4-phosphate and phosphoenolpyruvate: step 6/7. In terms of biological role, catalyzes the transfer of the enolpyruvyl moiety of phosphoenolpyruvate (PEP) to the 5-hydroxyl of shikimate-3-phosphate (S3P) to produce enolpyruvyl shikimate-3-phosphate and inorganic phosphate. This Dehalococcoides mccartyi (strain ATCC BAA-2100 / JCM 16839 / KCTC 5957 / BAV1) protein is 3-phosphoshikimate 1-carboxyvinyltransferase.